The sequence spans 400 residues: Jasmonate-induced oxygenase 1 (400 aa).

A Fe2OG dioxygenase domain is found at 248–349 (DVGACLRVNY…RVSLAFFYNP (102 aa)). Arg254 is a binding site for jasmonate. 2-oxoglutarate-binding residues include Asn256 and Tyr258. Fe cation is bound by residues His273, Asp275, and His330. 2-oxoglutarate-binding residues include Arg340 and Ser342. Jasmonate contacts are provided by Arg379 and Arg383.

Belongs to the iron/ascorbate-dependent oxidoreductase family. It depends on L-ascorbate as a cofactor. Fe(2+) serves as cofactor.

The catalysed reaction is jasmonate + 2-oxoglutarate + O2 = (1R,2R)-12-hydroxyjasmonate + succinate + CO2. In terms of biological role, 2-oxoglutarate-dependent dioxygenase involved in the oxidation of jasmonate (JA), a stress-induced phytohormone synthesized in response to attack by pathogens and herbivores, which triggers the activation of defense responses via the JA-mediated signaling pathway. Converts JA to 12-hydroxyjasmonate (12OH-JA), an inactive form of JA. Prevents over-accumulation of JA and indirectly its bioactive form JA-Ile under stress response. Acts as a negative regulator of JA-mediated defense signaling, by contributing to 12OH-JA accumulation, which represses JA defense responses upon infection by the fungal pathogen Botrytis cinerea and the herbivorous caterpillar Mamestra brassicae. The protein is Jasmonate-induced oxygenase 1 of Arabidopsis thaliana (Mouse-ear cress).